We begin with the raw amino-acid sequence, 218 residues long: N-alpha-acetyltransferase 11 (218 aa).

Residues 1–58 form an interaction with NAA15 region; sequence MNIRNARPDDLMNMQHCNLLCLPENYQMKYYFYHGLSWPQLSYIAEDEDGKIVGYVLA. Residues 1–152 enclose the N-acetyltransferase domain; it reads MNIRNARPDD…DAYAMKRDLS (152 aa). The segment at 175–218 is disordered; it reads EETQGGTLPDAGEACLPKNPTSKDSGSSDSTDVQDSSEDLDSIS. The segment covering 196–205 has biased composition (low complexity); sequence SKDSGSSDST. Acidic residues predominate over residues 209–218; sequence DSSEDLDSIS.

Belongs to the acetyltransferase family. ARD1 subfamily. In terms of assembly, component of the N-terminal acetyltransferase A (NatA) complex composed of NAA11 and NAA15. Interacts with HIF1A.

It localises to the cytoplasm. It is found in the nucleus. It carries out the reaction N-terminal glycyl-[protein] + acetyl-CoA = N-terminal N(alpha)-acetylglycyl-[protein] + CoA + H(+). It catalyses the reaction N-terminal L-alanyl-[protein] + acetyl-CoA = N-terminal N(alpha)-acetyl-L-alanyl-[protein] + CoA + H(+). The catalysed reaction is N-terminal L-seryl-[protein] + acetyl-CoA = N-terminal N(alpha)-acetyl-L-seryl-[protein] + CoA + H(+). The enzyme catalyses N-terminal L-valyl-[protein] + acetyl-CoA = N-terminal N(alpha)-acetyl-L-valyl-[protein] + CoA + H(+). It carries out the reaction N-terminal L-cysteinyl-[protein] + acetyl-CoA = N-terminal N(alpha)-acetyl-L-cysteinyl-[protein] + CoA + H(+). It catalyses the reaction N-terminal L-threonyl-[protein] + acetyl-CoA = N-terminal N(alpha)-acetyl-L-threonyl-[protein] + CoA + H(+). Functionally, displays alpha (N-terminal) acetyltransferase activity. Proposed alternative catalytic subunit of the N-terminal acetyltransferase A (NatA) complex. This chain is N-alpha-acetyltransferase 11 (Naa11), found in Mus musculus (Mouse).